The following is a 472-amino-acid chain: Chromosomal replication initiator protein DnaA (472 aa).

The segment at 1-73 is domain I, interacts with DnaA modulators; that stretch reads MSNMEHDRWS…LTCWQAELPE (73 aa). The domain II stretch occupies residues 73–128; that stretch reads EVCRIDLTVRSPMRAAVAKEAAAPVEHRRAEHRPATETRSHATVPASSNHDALGGS. Residues 92 to 127 are disordered; sequence EAAAPVEHRRAEHRPATETRSHATVPASSNHDALGG. The span at 97–112 shows a compositional bias: basic and acidic residues; it reads VEHRRAEHRPATETRS. The interval 129–351 is domain III, AAA+ region; the sequence is PLDPRLTFAS…GAINRLLAHS (223 aa). ATP is bound by residues Gly-176, Gly-178, Lys-179, and Thr-180. The tract at residues 352-472 is domain IV, binds dsDNA; that stretch reads KLNAQPVTLE…VDSLKRQLQE (121 aa).

This sequence belongs to the DnaA family. Oligomerizes as a right-handed, spiral filament on DNA at oriC.

Its subcellular location is the cytoplasm. Its function is as follows. Plays an essential role in the initiation and regulation of chromosomal replication. ATP-DnaA binds to the origin of replication (oriC) to initiate formation of the DNA replication initiation complex once per cell cycle. Binds the DnaA box (a 9 base pair repeat at the origin) and separates the double-stranded (ds)DNA. Forms a right-handed helical filament on oriC DNA; dsDNA binds to the exterior of the filament while single-stranded (ss)DNA is stabiized in the filament's interior. The ATP-DnaA-oriC complex binds and stabilizes one strand of the AT-rich DNA unwinding element (DUE), permitting loading of DNA polymerase. After initiation quickly degrades to an ADP-DnaA complex that is not apt for DNA replication. Binds acidic phospholipids. The sequence is that of Chromosomal replication initiator protein DnaA from Rhodopseudomonas palustris (strain HaA2).